Consider the following 286-residue polypeptide: 4-hydroxybenzoate octaprenyltransferase (286 aa).

7 helical membrane-spanning segments follow: residues 21–40 (GTLL…AGGM), 96–116 (LFVI…GLVV), 142–162 (FLGV…TGEV), 167–187 (WWLF…YAMV), 210–230 (QIIG…GWSA), 235–255 (LYGL…MLIF), and 266–286 (FLNN…DYLF).

It belongs to the UbiA prenyltransferase family. Mg(2+) is required as a cofactor.

The protein localises to the cell inner membrane. It catalyses the reaction all-trans-octaprenyl diphosphate + 4-hydroxybenzoate = 4-hydroxy-3-(all-trans-octaprenyl)benzoate + diphosphate. The protein operates within cofactor biosynthesis; ubiquinone biosynthesis. Catalyzes the prenylation of para-hydroxybenzoate (PHB) with an all-trans polyprenyl group. Mediates the second step in the final reaction sequence of ubiquinone-8 (UQ-8) biosynthesis, which is the condensation of the polyisoprenoid side chain with PHB, generating the first membrane-bound Q intermediate 3-octaprenyl-4-hydroxybenzoate. The protein is 4-hydroxybenzoate octaprenyltransferase of Shewanella sp. (strain MR-4).